The chain runs to 142 residues: Putative pre-16S rRNA nuclease (142 aa).

Belongs to the YqgF nuclease family.

It is found in the cytoplasm. Its function is as follows. Could be a nuclease involved in processing of the 5'-end of pre-16S rRNA. This chain is Putative pre-16S rRNA nuclease, found in Mycoplasmoides gallisepticum (strain R(low / passage 15 / clone 2)) (Mycoplasma gallisepticum).